The following is a 201-amino-acid chain: IMP cyclohydrolase (201 aa).

It belongs to the archaeal IMP cyclohydrolase family.

It carries out the reaction IMP + H2O = 5-formamido-1-(5-phospho-D-ribosyl)imidazole-4-carboxamide. The protein operates within purine metabolism; IMP biosynthesis via de novo pathway; IMP from 5-formamido-1-(5-phospho-D-ribosyl)imidazole-4-carboxamide: step 1/1. Its function is as follows. Catalyzes the cyclization of 5-formylamidoimidazole-4-carboxamide ribonucleotide to IMP. This chain is IMP cyclohydrolase, found in Methanococcus maripaludis (strain C7 / ATCC BAA-1331).